Consider the following 406-residue polypeptide: Olfactomedin-like protein 3 (406 aa).

Positions 1-21 are cleaved as a signal peptide; the sequence is MGPSTPLLILFLLSWSGPLQG. The stretch at 25 to 101 forms a coiled coil; the sequence is HLVEYMERRL…REVDYLETQN (77 aa). One can recognise an Olfactomedin-like domain in the interval 134 to 401; the sequence is DCGYTISQVR…QIVYKLEMRK (268 aa). Cysteine 135 and cysteine 328 are joined by a disulfide. N-linked (GlcNAc...) asparagine glycosylation is found at asparagine 177 and asparagine 248.

The protein belongs to the OLFML3 family. In terms of tissue distribution, abundant in placenta, moderate in liver and heart, whereas fairly weak in other tissues examined. On term placenta, mainly localized extracellularly surrounding the syncytiotrophoblastic cells and very rarely expressed in the maternal decidua layer.

Its subcellular location is the secreted. Its function is as follows. Secreted scaffold protein that plays an essential role in dorsoventral patterning during early development. Stabilizes axial formation by restricting chordin (CHRD) activity on the dorsal side. Acts by facilitating the association between the tolloid proteases and their substrate chordin (CHRD), leading to enhance chordin (CHRD) degradation. May have matrix-related function involved in placental and embryonic development, or play a similar role in other physiological processes. This Homo sapiens (Human) protein is Olfactomedin-like protein 3 (OLFML3).